The chain runs to 344 residues: uncharacterized protein (344 aa).

Positions 1-27 (MKKWLIIAVSLAIAIVLFMYTKGEAKA) are cleaved as a signal peptide. The region spanning 29-344 (GMTVGYTTGD…FWKAIRKGTK (316 aa)) is the GH18 domain. Residue Glu140 is the Proton donor of the active site.

This sequence belongs to the glycosyl hydrolase 18 family.

This is an uncharacterized protein from Bacillus subtilis (strain 168).